The following is a 784-amino-acid chain: Transcriptional activator somA (784 aa).

Residues 43 to 75 (MINNLNTYIYDYFLKRGYHECARALVKDESIKL) form the LisH domain. The segment covering 75 to 84 (LNTEPPTKTS) has biased composition (polar residues). 4 disordered regions span residues 75 to 122 (LNTE…PNLA), 212 to 295 (GLSQ…SQAL), 424 to 726 (MMAR…DLSI), and 764 to 784 (GFDPNISYPTDGVETGAGDGL). The span at 103 to 117 (DSKDGDKIKIPDDLP) shows a compositional bias: basic and acidic residues. A compositionally biased stretch (low complexity) spans 215–233 (QQQIAQLQKNQQMHMMQQM). The span at 234–244 (QREHSDMDMNG) shows a compositional bias: basic and acidic residues. The segment covering 247 to 259 (PQSPSSAENAPSP) has biased composition (low complexity). The span at 453–467 (SPQGSRAGTSPNPNE) shows a compositional bias: polar residues. The segment covering 564–592 (QQQQGQPMGPQQSPAQQPQSTGTPQTQNS) has biased composition (low complexity). Polar residues predominate over residues 607-624 (RTSPQSQNAAPPTPQQAN). Residues 629 to 638 (KKREPKDTAR) show a composition bias toward basic and acidic residues. 2 stretches are compositionally biased toward low complexity: residues 644 to 661 (KQPAAAAAAANTAATPSS) and 691 to 701 (PTTSAPQQPTS). Positions 702-715 (APAPQPIVQQPPPD) are enriched in pro residues.

The protein belongs to the FLO8 family. As to quaternary structure, interacts with ptaB.

The protein resides in the nucleus. Transcription factor that controls the expression of genes related to the process of conidiation and adherence and regulates biofilm formation. Controls conidiation and adhesion primarily by affecting the expression of the three regulatory genes flbB, stuA and medA. Required for virulence in an egg and a mouse infection model. The polypeptide is Transcriptional activator somA (Aspergillus fumigatus (strain ATCC MYA-4609 / CBS 101355 / FGSC A1100 / Af293) (Neosartorya fumigata)).